The primary structure comprises 127 residues: Large ribosomal subunit protein bL20c (127 aa).

This sequence belongs to the bacterial ribosomal protein bL20 family.

The protein localises to the plastid. The protein resides in the chloroplast. Binds directly to 23S ribosomal RNA and is necessary for the in vitro assembly process of the 50S ribosomal subunit. It is not involved in the protein synthesizing functions of that subunit. This chain is Large ribosomal subunit protein bL20c, found in Jasminum nudiflorum (Winter jasmine).